A 1091-amino-acid chain; its full sequence is ATP-dependent helicase/deoxyribonuclease subunit B (1091 aa).

It belongs to the helicase family. AddB/RexB type 2 subfamily. As to quaternary structure, heterodimer of AddA and RexB. Mg(2+) is required as a cofactor.

Its function is as follows. The heterodimer acts as both an ATP-dependent DNA helicase and an ATP-dependent, dual-direction single-stranded exonuclease. Recognizes the chi site generating a DNA molecule suitable for the initiation of homologous recombination. This subunit has 5' -&gt; 3' nuclease activity but not helicase activity. In Streptococcus pneumoniae (strain CGSP14), this protein is ATP-dependent helicase/deoxyribonuclease subunit B.